The following is a 67-amino-acid chain: ATP synthase F(0) complex subunit 8 (67 aa).

A helical transmembrane segment spans residues 8-24 (TWFTTILSTSFSIIHRL). Position 54 is an N6-acetyllysine; alternate (lysine 54). Lysine 54 is subject to N6-succinyllysine; alternate. N6-acetyllysine is present on lysine 57.

It belongs to the ATPase protein 8 family. As to quaternary structure, component of the ATP synthase complex composed at least of ATP5F1A/subunit alpha, ATP5F1B/subunit beta, ATP5MC1/subunit c (homooctomer), MT-ATP6/subunit a, MT-ATP8/subunit 8, ATP5ME/subunit e, ATP5MF/subunit f, ATP5MG/subunit g, ATP5MK/subunit k, ATP5MJ/subunit j, ATP5F1C/subunit gamma, ATP5F1D/subunit delta, ATP5F1E/subunit epsilon, ATP5PF/subunit F6, ATP5PB/subunit b, ATP5PD/subunit d, ATP5PO/subunit OSCP. ATP synthase complex consists of a soluble F(1) head domain (subunits alpha(3) and beta(3)) - the catalytic core - and a membrane F(0) domain - the membrane proton channel (subunits c, a, 8, e, f, g, k and j). These two domains are linked by a central stalk (subunits gamma, delta, and epsilon) rotating inside the F1 region and a stationary peripheral stalk (subunits F6, b, d, and OSCP). Interacts with PRICKLE3.

It localises to the mitochondrion membrane. Its function is as follows. Subunit 8, of the mitochondrial membrane ATP synthase complex (F(1)F(0) ATP synthase or Complex V) that produces ATP from ADP in the presence of a proton gradient across the membrane which is generated by electron transport complexes of the respiratory chain. ATP synthase complex consist of a soluble F(1) head domain - the catalytic core - and a membrane F(1) domain - the membrane proton channel. These two domains are linked by a central stalk rotating inside the F(1) region and a stationary peripheral stalk. During catalysis, ATP synthesis in the catalytic domain of F(1) is coupled via a rotary mechanism of the central stalk subunits to proton translocation. In vivo, can only synthesize ATP although its ATP hydrolase activity can be activated artificially in vitro. Part of the complex F(0) domain. The protein is ATP synthase F(0) complex subunit 8 of Glis glis (Fat dormouse).